Here is a 162-residue protein sequence, read N- to C-terminus: MNSRTASARGWFSSRPPTSESDLEPATDGPASETTTLSPEATTFNDTRIPDAAGGTAGVGTMLLSFGIITVIGLAVALVLYIRKKKRLEKLRHQLMPMYNFDPTEEQDELEQELLEHGRDAASVQAATSVQAMQGKTTLPSQGPLQRPSRLVFTDVANAIHA.

The interval 1 to 49 is disordered; it reads MNSRTASARGWFSSRPPTSESDLEPATDGPASETTTLSPEATTFNDTRI. Polar residues predominate over residues 32-46; the sequence is SETTTLSPEATTFND. Residues 62–82 form a helical membrane-spanning segment; the sequence is MLLSFGIITVIGLAVALVLYI.

The protein resides in the membrane. This is an uncharacterized protein from Homo sapiens (Human).